We begin with the raw amino-acid sequence, 502 residues long: UDP-N-acetylmuramoylalanine--D-glutamate ligase (502 aa).

129–135 provides a ligand contact to ATP; it reads GTNGKTT.

Belongs to the MurCDEF family.

Its subcellular location is the cytoplasm. The catalysed reaction is UDP-N-acetyl-alpha-D-muramoyl-L-alanine + D-glutamate + ATP = UDP-N-acetyl-alpha-D-muramoyl-L-alanyl-D-glutamate + ADP + phosphate + H(+). It functions in the pathway cell wall biogenesis; peptidoglycan biosynthesis. Cell wall formation. Catalyzes the addition of glutamate to the nucleotide precursor UDP-N-acetylmuramoyl-L-alanine (UMA). This chain is UDP-N-acetylmuramoylalanine--D-glutamate ligase, found in Burkholderia ambifaria (strain MC40-6).